The sequence spans 448 residues: DNA repair protein RadA (448 aa).

The C4-type zinc finger occupies 10-27 (CQHCGFTSPKWLGKCVQC). Residue 96-103 (GSPGVGKS) participates in ATP binding. Residues 253 to 257 (KNRFG) carry the RadA KNRFG motif motif. Residues 351–448 (DVFINVSGGI…NAVGKIVEWM (98 aa)) are lon-protease-like.

Belongs to the RecA family. RadA subfamily.

Its function is as follows. DNA-dependent ATPase involved in processing of recombination intermediates, plays a role in repairing DNA breaks. Stimulates the branch migration of RecA-mediated strand transfer reactions, allowing the 3' invading strand to extend heteroduplex DNA faster. Binds ssDNA in the presence of ADP but not other nucleotides, has ATPase activity that is stimulated by ssDNA and various branched DNA structures, but inhibited by SSB. Does not have RecA's homology-searching function. In Helicobacter pylori (strain ATCC 700392 / 26695) (Campylobacter pylori), this protein is DNA repair protein RadA.